The following is a 325-amino-acid chain: Acetyl-coenzyme A carboxylase carboxyl transferase subunit alpha (325 aa).

The 255-residue stretch at 43–297 (ELENNSTQLR…KTSLIAHLRQ (255 aa)) folds into the CoA carboxyltransferase C-terminal domain.

It belongs to the AccA family. Acetyl-CoA carboxylase is a heterohexamer composed of biotin carboxyl carrier protein (AccB), biotin carboxylase (AccC) and two subunits each of ACCase subunit alpha (AccA) and ACCase subunit beta (AccD).

The protein localises to the cytoplasm. The catalysed reaction is N(6)-carboxybiotinyl-L-lysyl-[protein] + acetyl-CoA = N(6)-biotinyl-L-lysyl-[protein] + malonyl-CoA. It functions in the pathway lipid metabolism; malonyl-CoA biosynthesis; malonyl-CoA from acetyl-CoA: step 1/1. Its function is as follows. Component of the acetyl coenzyme A carboxylase (ACC) complex. First, biotin carboxylase catalyzes the carboxylation of biotin on its carrier protein (BCCP) and then the CO(2) group is transferred by the carboxyltransferase to acetyl-CoA to form malonyl-CoA. This Cyanothece sp. (strain PCC 7425 / ATCC 29141) protein is Acetyl-coenzyme A carboxylase carboxyl transferase subunit alpha.